The following is a 76-amino-acid chain: Candidate secreted effector protein MPL124497 (76 aa).

The signal sequence occupies residues M1–G21.

It belongs to the CPGH1 family.

Its subcellular location is the secreted. It localises to the host cell. It is found in the host cytoplasm. The protein localises to the host nucleus. In terms of biological role, rust effector delivered into infected tissues to modulate host functions and contribute to pathogen virulence. Enhances leaf colonization by the bacteria Pseudomonas syringae and the oomycete Hyaloperonospora arabidopsidis pathogens in an Arabidopsis thaliana infection model. The protein is Candidate secreted effector protein MPL124497 of Melampsora larici-populina (strain 98AG31 / pathotype 3-4-7) (Poplar leaf rust fungus).